We begin with the raw amino-acid sequence, 525 residues long: GMP synthase [glutamine-hydrolyzing] (525 aa).

Positions 12–206 (RILIIDFGSQ…THGICGCGGD (195 aa)) constitute a Glutamine amidotransferase type-1 domain. Residue Cys90 is the Nucleophile of the active site. Catalysis depends on residues His180 and Glu182. A GMPS ATP-PPase domain is found at 207–399 (WTMAAFKDQA…LGLPDEMVGR (193 aa)). 234–240 (SGGVDSS) lines the ATP pocket.

In terms of assembly, homodimer.

It catalyses the reaction XMP + L-glutamine + ATP + H2O = GMP + L-glutamate + AMP + diphosphate + 2 H(+). Its pathway is purine metabolism; GMP biosynthesis; GMP from XMP (L-Gln route): step 1/1. Its function is as follows. Catalyzes the synthesis of GMP from XMP. This Rhodospirillum rubrum (strain ATCC 11170 / ATH 1.1.1 / DSM 467 / LMG 4362 / NCIMB 8255 / S1) protein is GMP synthase [glutamine-hydrolyzing].